Reading from the N-terminus, the 247-residue chain is tRNA pseudouridine synthase A (247 aa).

The Nucleophile role is filled by aspartate 52. Tyrosine 113 contributes to the substrate binding site.

This sequence belongs to the tRNA pseudouridine synthase TruA family. Homodimer.

The catalysed reaction is uridine(38/39/40) in tRNA = pseudouridine(38/39/40) in tRNA. Formation of pseudouridine at positions 38, 39 and 40 in the anticodon stem and loop of transfer RNAs. The polypeptide is tRNA pseudouridine synthase A (Bartonella tribocorum (strain CIP 105476 / IBS 506)).